Consider the following 492-residue polypeptide: Protein adenylyltransferase Fic (492 aa).

Over residues 1-18 (MGTEAEQPSPPAQQQDQE) the composition is skewed to low complexity. The tract at residues 1–26 (MGTEAEQPSPPAQQQDQENPPLCKAQ) is disordered. Residues 33 to 55 (LYRFVLIFVAGSLAAWTFHALSS) form a helical membrane-spanning segment. TPR repeat units follow at residues 118-151 (ALGA…APRH) and 152-186 (PEVL…SPSN). The Inhibitory (S/T)XXXE(G/N) motif motif lies at 243-248 (SVGIEG). Residues E247 and 328-331 (VGGH) each bind ATP. A Fido domain is found at 297 to 432 (ITIKDILELH…IRPFVRFIAD (136 aa)). The active site involves H375. Residues 379–386 (DGNGRTSR), 411–412 (YY), and N419 each bind ATP.

This sequence belongs to the fic family. As to quaternary structure, homodimer; homodimerization may regulate adenylyltransferase and phosphodiesterase activities.

It is found in the membrane. It catalyses the reaction L-tyrosyl-[protein] + ATP = O-(5'-adenylyl)-L-tyrosyl-[protein] + diphosphate. It carries out the reaction L-threonyl-[protein] + ATP = 3-O-(5'-adenylyl)-L-threonyl-[protein] + diphosphate. The enzyme catalyses 3-O-(5'-adenylyl)-L-threonyl-[protein] + H2O = L-threonyl-[protein] + AMP + H(+). Its activity is regulated as follows. The side chain of Glu-247 determines which of the two opposing activities (AMPylase or de-AMPylase) will take place. In response to endoplasmic reticulum stress, mediates de-AMPylase activity. Adenylyltransferase activity is inhibited by the inhibitory helix present at the N-terminus: Glu-247 binds ATP and competes with ATP-binding at Arg-386, thereby preventing adenylyltransferase activity. In unstressed cells, disengagement of Glu-247 promotes adenylyltransferase activity. Activation dissociates ATP-binding from Glu-247, allowing ordered binding of the entire ATP moiety with the alpha-phosphate in an orientation that is productive for accepting an incoming target hydroxyl side chain. Functionally, protein that can both mediate the addition of adenosine 5'-monophosphate (AMP) to specific residues of target proteins (AMPylation), and the removal of the same modification from target proteins (de-AMPylation), depending on the context. The side chain of Glu-247 determines which of the two opposing activities (AMPylase or de-AMPylase) will take place. Acts as a key regulator of the unfolded protein response (UPR) by mediating AMPylation or de-AMPylation of Hsc70-3/BiP. In unstressed cells, acts as an adenylyltransferase by mediating AMPylation of Hsc70-3/BiP at 'Thr-518', thereby inactivating it. In response to endoplasmic reticulum stress, acts as a phosphodiesterase by mediating removal of ATP (de-AMPylation) from Hsc70-3/BiP at 'Thr-518', leading to restore HSPA5/BiP activity. The polypeptide is Protein adenylyltransferase Fic (Drosophila melanogaster (Fruit fly)).